The chain runs to 95 residues: Small ribosomal subunit protein bS20 (95 aa).

2 disordered regions span residues 1–26 (MALR…RSRK) and 76–95 (KSRL…AQPA). Over residues 80–95 (AKALNKAKAAQAAQPA) the composition is skewed to low complexity.

Belongs to the bacterial ribosomal protein bS20 family.

Functionally, binds directly to 16S ribosomal RNA. The polypeptide is Small ribosomal subunit protein bS20 (Deinococcus geothermalis (strain DSM 11300 / CIP 105573 / AG-3a)).